A 308-amino-acid polypeptide reads, in one-letter code: Cilia- and flagella-associated protein 73 (308 aa).

2 coiled-coil regions span residues 34-143 and 175-233; these read RLLE…LEPC and AALR…WESK.

This sequence belongs to the CFAP73 family.

It localises to the cytoplasm. The protein localises to the cytoskeleton. The protein resides in the cilium axoneme. May play a role in ciliary/flagellar motility by regulating the assembly and the activity of axonemal inner dynein arm. This chain is Cilia- and flagella-associated protein 73, found in Homo sapiens (Human).